A 217-amino-acid polypeptide reads, in one-letter code: Growth hormone variant (217 aa).

Residues 1–26 (MAAGSRTSLLLAFGLLCLPWLQEGSA) form the signal peptide. Cystine bridges form between cysteine 79/cysteine 191 and cysteine 208/cysteine 215. Serine 132 is modified (phosphoserine). A glycan (N-linked (GlcNAc...) asparagine) is linked at asparagine 166. Residue serine 176 is modified to Phosphoserine.

It belongs to the somatotropin/prolactin family. In terms of tissue distribution, expressed in the placenta.

The protein resides in the secreted. Functionally, plays an important role in growth control. Its major role in stimulating body growth is to stimulate the liver and other tissues to secrete IGF1. It stimulates both the differentiation and proliferation of myoblasts. It also stimulates amino acid uptake and protein synthesis in muscle and other tissues. The chain is Growth hormone variant (GH2) from Pan troglodytes (Chimpanzee).